The sequence spans 306 residues: Diacylglycerol kinase (306 aa).

In terms of domain architecture, DAGKc spans Met-1–Tyr-132. ATP contacts are provided by residues Asn-10–Gly-14, Thr-41, Gly-67–Glu-73, and Thr-94. Positions 213, 216, and 218 each coordinate Mg(2+). The Proton acceptor role is filled by Glu-273.

It belongs to the diacylglycerol/lipid kinase family. Homodimer. Requires Mg(2+) as cofactor.

The catalysed reaction is a 1,2-diacyl-sn-glycerol + ATP = a 1,2-diacyl-sn-glycero-3-phosphate + ADP + H(+). Functionally, catalyzes the phosphorylation of diacylglycerol (DAG) into phosphatidic acid. Is a key enzyme involved in the production of lipoteichoic acid by reintroducing DAG formed from the breakdown of membrane phospholipids into the phosphatidylglycerol biosynthetic pathway. This is Diacylglycerol kinase (dagK) from Staphylococcus carnosus (strain TM300).